Reading from the N-terminus, the 177-residue chain is MSGYPAEGEIIQIHSYKHNGLIHRVWEESIVLKGTSTCIIGANDKTMVTEADGRTWVTREPAICFFHAKHWFNIIGMIREEGIYYYCNLSSPFVWDEEALKYIDYDLDIKVFPDMTYILLDEDEYERHRKEMNYPDVIDRILKNNVKKLISWIHERKGPFAPDFIDKWYEKFLSYRK.

Arg-24 (proton donor) is an active-site residue. The Mg(2+) site is built by Asn-88, Asp-104, Asp-106, Asp-108, Asp-121, and Glu-124.

This sequence belongs to the Ntdp family. It depends on Mg(2+) as a cofactor.

The enzyme catalyses a ribonucleoside 5'-triphosphate + H2O = a ribonucleoside 5'-diphosphate + phosphate + H(+). It carries out the reaction a ribonucleoside 5'-diphosphate + H2O = a ribonucleoside 5'-phosphate + phosphate + H(+). Functionally, has nucleoside phosphatase activity towards nucleoside triphosphates and nucleoside diphosphates. The sequence is that of Nucleoside triphosphate/diphosphate phosphatase from Geobacillus sp. (strain WCH70).